Consider the following 130-residue polypeptide: Methylglyoxal synthase (130 aa).

The 130-residue stretch at 1 to 130 (MSKPRIALIA…DLARNMQDVC (130 aa)) folds into the MGS-like domain. Substrate contacts are provided by residues H11, K15, 37-40 (TGTT), and 57-58 (SG). The active-site Proton donor/acceptor is D63. Position 90 (H90) interacts with substrate.

Belongs to the methylglyoxal synthase family.

The catalysed reaction is dihydroxyacetone phosphate = methylglyoxal + phosphate. Catalyzes the formation of methylglyoxal from dihydroxyacetone phosphate. This chain is Methylglyoxal synthase, found in Burkholderia lata (strain ATCC 17760 / DSM 23089 / LMG 22485 / NCIMB 9086 / R18194 / 383).